We begin with the raw amino-acid sequence, 122 residues long: Flagellar protein FliT (122 aa).

A required for homodimerization region spans residues 1 to 50; it reads MTSTVEFINRWQRIALLSQSLLELAQRGEWDLLLQQEVSYLQSIETVMEK. A fliD binding region spans residues 60–98; it reads IQDMVAGYIKQTLDNEQLLKGLLQQRLDELSSLIGQSTR.

Belongs to the FliT family. Homodimer. Interacts with FliD and FlhC.

It localises to the cytoplasm. Its subcellular location is the cytosol. Its function is as follows. Dual-function protein that regulates the transcription of class 2 flagellar operons and that also acts as an export chaperone for the filament-capping protein FliD. As a transcriptional regulator, acts as an anti-FlhDC factor; it directly binds FlhC, thus inhibiting the binding of the FlhC/FlhD complex to class 2 promoters, resulting in decreased expression of class 2 flagellar operons. As a chaperone, effects FliD transition to the membrane by preventing its premature polymerization, and by directing it to the export apparatus. The polypeptide is Flagellar protein FliT (Salmonella gallinarum (strain 287/91 / NCTC 13346)).